The following is a 341-amino-acid chain: MSEYTLQQLADHVGGEVRGNSQLPILRVATLQSATGDAIAFLANSRYKSQLETTSAGAVIVSEKDDSDAIDNAIRVVNPYAAFARIAQLLDTTPKPAHGIAESAKIAPSATIGQNVSIGEYTVIDEGVIIGDNTSIGPHCYIGPETQIGAGCTLWSGVKIYHRCVIGDDCLFHSGSIIGADGFGWAPDNGKWLKIPQLGRVVIKDNVEIGASTTVDRGALDDTVISSGCIIDNQCQIAHNVFIDEDTAIAGCTVLAGSCRIGKRCMIGGASAINGHISVCDDVQIMGFAMVIKEITEPGVYASGIPASGHREWRRNGARFRQLDDLFKRVKELEKQADDNN.

Residue His-239 is the Proton acceptor of the active site.

It belongs to the transferase hexapeptide repeat family. LpxD subfamily. As to quaternary structure, homotrimer.

It carries out the reaction a UDP-3-O-[(3R)-3-hydroxyacyl]-alpha-D-glucosamine + a (3R)-hydroxyacyl-[ACP] = a UDP-2-N,3-O-bis[(3R)-3-hydroxyacyl]-alpha-D-glucosamine + holo-[ACP] + H(+). It participates in bacterial outer membrane biogenesis; LPS lipid A biosynthesis. Its function is as follows. Catalyzes the N-acylation of UDP-3-O-acylglucosamine using 3-hydroxyacyl-ACP as the acyl donor. Is involved in the biosynthesis of lipid A, a phosphorylated glycolipid that anchors the lipopolysaccharide to the outer membrane of the cell. The sequence is that of UDP-3-O-acylglucosamine N-acyltransferase from Idiomarina loihiensis (strain ATCC BAA-735 / DSM 15497 / L2-TR).